A 156-amino-acid chain; its full sequence is CKLF-like MARVEL transmembrane domain-containing protein 5 (156 aa).

The region spanning 29–146 (FLSSLKGILL…DAFKIYRTEL (118 aa)) is the MARVEL domain. Transmembrane regions (helical) follow at residues 35-55 (GILL…FTAS), 56-76 (ISAY…FLFL), 93-113 (LDFL…FAAV), and 119-139 (AAIA…YDAF).

This sequence belongs to the chemokine-like factor family.

Its subcellular location is the membrane. This is CKLF-like MARVEL transmembrane domain-containing protein 5 (Cmtm5) from Mus musculus (Mouse).